Consider the following 465-residue polypeptide: Serine/threonine-protein kinase AtPK1/AtPK6 (465 aa).

Residues 91–96 carry the LVxCxE motif motif; that stretch reads LVECLE. Residues 134–389 form the Protein kinase domain; it reads FEVMKVVGKG…AEEIKQHKWF (256 aa). ATP is bound by residues 140-148 and lysine 163; that span reads VGKGAFGKV. Aspartate 257 (proton acceptor) is an active-site residue. An activation loop region spans residues 275–301; it reads DFGLAKEFEENTRSNSMCGTTEYMAPE. The residue at position 290 (serine 290) is a Phosphoserine; by PDPK1. One can recognise an AGC-kinase C-terminal domain in the interval 390-460; the sequence is KGINWKKLEA…VRPPPSFLHQ (71 aa). Phosphothreonine; by TOR is present on threonine 449.

The protein belongs to the protein kinase superfamily. AGC Ser/Thr protein kinase family. S6 kinase subfamily. As to quaternary structure, interacts with RAPTOR1. Interacts with RBR1-E2FB complex through its LVxCxE motif. Interacts with TAP46. Binds to MRF1. Undergoes serine-specific autophosphorylation. Phosphorylated at Thr-449 by TOR. In terms of tissue distribution, expressed in all tissues.

It is found in the cytoplasm. Its subcellular location is the nucleus. The enzyme catalyses L-seryl-[protein] + ATP = O-phospho-L-seryl-[protein] + ADP + H(+). It carries out the reaction L-threonyl-[protein] + ATP = O-phospho-L-threonyl-[protein] + ADP + H(+). Its activity is regulated as follows. Activated by PDK1. Repressed during osmotic stress. Functionally, downstream effector of TOR signaling pathway involved in osmotic stress response. Could be involved in the control of plant growth and development. Phosphorylates the ribosomal proteins P14, P16 and S6. Functions as a repressor of cell proliferation and required for maintenance of chromosome stability and ploidy levels through the RBR1-E2F pathway. Mediates the phosphorylation of MRFs (e.g. MRF1). The polypeptide is Serine/threonine-protein kinase AtPK1/AtPK6 (Arabidopsis thaliana (Mouse-ear cress)).